The following is a 255-amino-acid chain: MARVGGGKRHLKRLAAPAFWPIHRKEAVWAVKPRPGPHPIEESIPLLILVRDVLGYAETSREARKLIAEGRIKVDGRVRKDYKFPVGAMDVIEIVGADEYYRMIPYPVKYLVPMRIDAEEAKKKICRIENKVTVKGGHVQLNLHDGRNVLIRVEDPRNPVEAQEYKTLGGLLITVPEQEILDYVPFEEGVIAIVKSGRNVGRVGRIEEIVKGMGRKKTLVKMRDVHDEVFYTVAEYVFPIGKEEPLIKLPEGAWK.

The 64-residue stretch at 44–107 (IPLLILVRDV…DEYYRMIPYP (64 aa)) folds into the S4 RNA-binding domain.

The protein belongs to the eukaryotic ribosomal protein eS4 family.

The protein is Small ribosomal subunit protein eS4 of Ignicoccus hospitalis (strain KIN4/I / DSM 18386 / JCM 14125).